The sequence spans 89 residues: Nucleoside triphosphatase I (89 aa).

Residues 42-89 enclose the Helicase ATP-binding domain; that stretch reads FLGLDKMHSLLLFHDTGVGKTITTTFIIKQLKNIYTNWSILLLVKKHL. Position 55 to 62 (55 to 62) interacts with ATP; it reads HDTGVGKT.

This sequence belongs to the helicase family. NPH I subfamily.

It carries out the reaction a ribonucleoside 5'-triphosphate + H2O = a ribonucleoside 5'-diphosphate + phosphate + H(+). Its function is as follows. Serves two roles in transcription; it acts in concert with viral termination factor/capping enzyme to catalyze release of UUUUUNU-containing nascent RNA from the elongation complex, and it acts by itself as a polymerase elongation factor to facilitate readthrough of intrinsic pause sites. The polypeptide is Nucleoside triphosphatase I (NPH1) (Swinepox virus (strain Kasza) (SWPV)).